A 195-amino-acid chain; its full sequence is Peptidyl-tRNA hydrolase (195 aa).

Y14 is a binding site for tRNA. H19 acts as the Proton acceptor in catalysis. TRNA is bound by residues Y64 and N66.

It belongs to the PTH family. Monomer.

Its subcellular location is the cytoplasm. The enzyme catalyses an N-acyl-L-alpha-aminoacyl-tRNA + H2O = an N-acyl-L-amino acid + a tRNA + H(+). In terms of biological role, hydrolyzes ribosome-free peptidyl-tRNAs (with 1 or more amino acids incorporated), which drop off the ribosome during protein synthesis, or as a result of ribosome stalling. Catalyzes the release of premature peptidyl moieties from peptidyl-tRNA molecules trapped in stalled 50S ribosomal subunits, and thus maintains levels of free tRNAs and 50S ribosomes. The sequence is that of Peptidyl-tRNA hydrolase from Desulforudis audaxviator (strain MP104C).